A 167-amino-acid polypeptide reads, in one-letter code: MDKLTIISGCLFLAADIFAIASIANPDWINTGESAGALTVGLVRQCQTIHGRDRICIPPRLPPEWVTTLFFIIMGIISLTVTCGLLVASHWRREATKYARWIAFTGMILFCMAALIFPIGFYINEVGGQPYKLPNNTVVGSSYVLFVLSIFFTIVGLLFAGKVCLPG.

This is an uncharacterized protein from Xenopus laevis (African clawed frog).